A 379-amino-acid chain; its full sequence is Sialidase-2 (379 aa).

Residues 20–23 carry the FRIP motif motif; sequence YRIP. Residues R21 and R41 each contribute to the substrate site. The active-site Proton acceptor is D46. Residues 127-138 form a BNR 1 repeat; it reads VTSTDYGMNWSP. Positions 179 and 181 each coordinate substrate. A BNR 2 repeat occupies 197-208; it reads FISLDHGHTWEL. Substrate contacts are provided by E218, R237, and R303. Residue Y333 is the Nucleophile of the active site. E354 is an active-site residue.

It belongs to the glycosyl hydrolase 33 family. Detected in skeletal muscle.

The protein resides in the cytoplasm. It is found in the cytosol. The enzyme catalyses Hydrolysis of alpha-(2-&gt;3)-, alpha-(2-&gt;6)-, alpha-(2-&gt;8)- glycosidic linkages of terminal sialic acid residues in oligosaccharides, glycoproteins, glycolipids, colominic acid and synthetic substrates.. It carries out the reaction a ganglioside GD1a + H2O = a ganglioside GM1 + N-acetylneuraminate. The catalysed reaction is a ganglioside GM1 + H2O = a ganglioside GA1 + N-acetylneuraminate. It catalyses the reaction a ganglioside GT1b + H2O = a ganglioside GD1b + N-acetylneuraminate. The enzyme catalyses a ganglioside GD1b + H2O = a ganglioside GM1 + N-acetylneuraminate. It carries out the reaction a ganglioside GD3 + H2O = a ganglioside GM3 + N-acetylneuraminate. The catalysed reaction is a ganglioside GM3 + H2O = a beta-D-galactosyl-(1-&gt;4)-beta-D-glucosyl-(1&lt;-&gt;1)-ceramide + N-acetylneuraminate. It catalyses the reaction a ganglioside GM2 + H2O = a ganglioside GA2 + N-acetylneuraminate. The enzyme catalyses a neolactoside IV(3)-alpha-NeuAc-nLc4Cer(d18:1(4E)) + H2O = a neolactoside nLc4Cer(d18:1(4E)) + N-acetylneuraminate. It carries out the reaction N-acetyl-alpha-neuraminosyl-(2-&gt;3)-beta-D-galactosyl-(1-&gt;4)-D-glucose + H2O = lactose + N-acetylneuraminate. Exo-alpha-sialidase that catalyzes the hydrolytic cleavage of the terminal sialic acid (N-acetylneuraminic acid, Neu5Ac) of a glycan moiety in the catabolism of glycolipids, glycoproteins and oligosacharides. Recognizes sialyl linkage positions of the glycan moiety as well as the supramolecular organization of the sialoglycoconjugate. Displays preference for alpha-(2-&gt;3)-sialylated GD1a and GT1B gangliosides over alpha-(2-&gt;8)-sialylated GD1b, in both monomeric forms and micelles. Hydrolyzes monomeric GM1 ganglioside, but has no activity toward the miscellar form. Has lower sialidase activity for glycoproteins such as fetuin and TF/transferrin that carry a mixture of alpha-(2-&gt;3) and alpha-(2-&gt;6)-sialyl linkages. Cleaves milk oligosaccharide alpha-(2-&gt;3)-sialyllactose, but is inactive toward alpha-(2-&gt;6)-sialyllactose isomer. Has no activity toward colominic acid, a homomer of alpha-(2-&gt;8)-linked Neu5Ac residues. The chain is Sialidase-2 (Neu2) from Rattus norvegicus (Rat).